The following is a 393-amino-acid chain: NAD(P)H-quinone oxidoreductase subunit H, chloroplastic (393 aa).

The protein belongs to the complex I 49 kDa subunit family. NDH is composed of at least 16 different subunits, 5 of which are encoded in the nucleus.

Its subcellular location is the plastid. It localises to the chloroplast thylakoid membrane. The catalysed reaction is a plastoquinone + NADH + (n+1) H(+)(in) = a plastoquinol + NAD(+) + n H(+)(out). It carries out the reaction a plastoquinone + NADPH + (n+1) H(+)(in) = a plastoquinol + NADP(+) + n H(+)(out). Its function is as follows. NDH shuttles electrons from NAD(P)H:plastoquinone, via FMN and iron-sulfur (Fe-S) centers, to quinones in the photosynthetic chain and possibly in a chloroplast respiratory chain. The immediate electron acceptor for the enzyme in this species is believed to be plastoquinone. Couples the redox reaction to proton translocation, and thus conserves the redox energy in a proton gradient. The polypeptide is NAD(P)H-quinone oxidoreductase subunit H, chloroplastic (Solanum lycopersicum (Tomato)).